Consider the following 133-residue polypeptide: Small ribosomal subunit protein uS11 (133 aa).

The protein belongs to the universal ribosomal protein uS11 family. Part of the 30S ribosomal subunit. Interacts with proteins S7 and S18. Binds to IF-3.

Its function is as follows. Located on the platform of the 30S subunit, it bridges several disparate RNA helices of the 16S rRNA. Forms part of the Shine-Dalgarno cleft in the 70S ribosome. This chain is Small ribosomal subunit protein uS11, found in Burkholderia pseudomallei (strain 1106a).